We begin with the raw amino-acid sequence, 71 residues long: UPF0337 protein PPA1427 (71 aa).

The tract at residues 20 to 46 is disordered; that stretch reads EKIGGLTDDSDLKSAGADQKASGKVAQ.

This sequence belongs to the UPF0337 (CsbD) family.

The polypeptide is UPF0337 protein PPA1427 (Cutibacterium acnes (strain DSM 16379 / KPA171202) (Propionibacterium acnes)).